The primary structure comprises 506 residues: Probable alpha-L-arabinofuranosidase B (506 aa).

An N-terminal signal peptide occupies residues 1-26; sequence MSSGLSLERACAVALGIVASASLVAA. Positions 27-343 are catalytic; that stretch reads GPCDIYSSGG…ADIVAAKYAI (317 aa). Cystine bridges form between cysteine 29–cysteine 39, cysteine 89–cysteine 94, and cysteine 184–cysteine 185. An N-linked (GlcNAc...) asparagine glycan is attached at asparagine 91. Residue aspartate 227 coordinates substrate. The Nucleophile role is filled by glutamate 229. Asparagine 230 and glycine 304 together coordinate substrate. Aspartate 305 acts as the Proton donor in catalysis. An ABD region spans residues 344-506; the sequence is ASLTSGPALT…VSWVVSTGFA (163 aa). Cysteine 409 and cysteine 447 form a disulfide bridge. 8 residues coordinate substrate: histidine 424, asparagine 426, phenylalanine 427, aspartate 443, histidine 471, glutamate 473, leucine 476, and aspartate 496.

This sequence belongs to the glycosyl hydrolase 54 family.

It is found in the secreted. The catalysed reaction is Hydrolysis of terminal non-reducing alpha-L-arabinofuranoside residues in alpha-L-arabinosides.. It participates in glycan metabolism; L-arabinan degradation. Its function is as follows. Alpha-L-arabinofuranosidase involved in the degradation of arabinoxylan, a major component of plant hemicellulose. Able to hydrolyze 1,5-, 1,3- and 1,2-alpha-linkages not only in L-arabinofuranosyl oligosaccharides, but also in polysaccharides containing terminal non-reducing L-arabinofuranoses in side chains, like L-arabinan, arabinogalactan and arabinoxylan. The polypeptide is Probable alpha-L-arabinofuranosidase B (abfB) (Aspergillus flavus (strain ATCC 200026 / FGSC A1120 / IAM 13836 / NRRL 3357 / JCM 12722 / SRRC 167)).